A 151-amino-acid polypeptide reads, in one-letter code: Deoxyuridine 5'-triphosphate nucleotidohydrolase (151 aa).

Residues 70–72 (RSG), Asn83, 87–89 (LID), and Met97 each bind substrate.

This sequence belongs to the dUTPase family. Mg(2+) serves as cofactor.

The catalysed reaction is dUTP + H2O = dUMP + diphosphate + H(+). Its pathway is pyrimidine metabolism; dUMP biosynthesis; dUMP from dCTP (dUTP route): step 2/2. Its function is as follows. This enzyme is involved in nucleotide metabolism: it produces dUMP, the immediate precursor of thymidine nucleotides and it decreases the intracellular concentration of dUTP so that uracil cannot be incorporated into DNA. The sequence is that of Deoxyuridine 5'-triphosphate nucleotidohydrolase from Pseudomonas putida (strain ATCC 700007 / DSM 6899 / JCM 31910 / BCRC 17059 / LMG 24140 / F1).